The following is a 282-amino-acid chain: NADPH-dependent 7-cyano-7-deazaguanine reductase (282 aa).

88–90 is a binding site for substrate; it reads IES. Residue 90–91 participates in NADPH binding; the sequence is SK. Catalysis depends on Cys190, which acts as the Thioimide intermediate. The active-site Proton donor is the Asp197. 229-230 lines the substrate pocket; it reads HE. 258-259 contributes to the NADPH binding site; it reads RG.

The protein belongs to the GTP cyclohydrolase I family. QueF type 2 subfamily. Homodimer.

It localises to the cytoplasm. It catalyses the reaction 7-aminomethyl-7-carbaguanine + 2 NADP(+) = 7-cyano-7-deazaguanine + 2 NADPH + 3 H(+). Its pathway is tRNA modification; tRNA-queuosine biosynthesis. Functionally, catalyzes the NADPH-dependent reduction of 7-cyano-7-deazaguanine (preQ0) to 7-aminomethyl-7-deazaguanine (preQ1). The sequence is that of NADPH-dependent 7-cyano-7-deazaguanine reductase from Escherichia coli (strain UTI89 / UPEC).